Consider the following 723-residue polypeptide: Tryptophan 2-monooxygenase (723 aa).

4 residues coordinate FMN: S218, E238, R246, and R266. R266 contacts substrate.

This sequence belongs to the tryptophan 2-monooxygenase family. It depends on FMN as a cofactor.

It carries out the reaction L-tryptophan + O2 = indole-3-acetamide + CO2 + H2O. It participates in plant hormone metabolism; auxin biosynthesis. The protein is Tryptophan 2-monooxygenase (iaaM) of Allorhizobium ampelinum (strain ATCC BAA-846 / DSM 112012 / S4) (Agrobacterium vitis (strain S4)).